A 198-amino-acid chain; its full sequence is Holliday junction resolvase RecU (198 aa).

Residues Thr-83, Asp-85, Glu-98, and Gln-117 each coordinate Mg(2+).

It belongs to the RecU family. It depends on Mg(2+) as a cofactor.

It is found in the cytoplasm. It catalyses the reaction Endonucleolytic cleavage at a junction such as a reciprocal single-stranded crossover between two homologous DNA duplexes (Holliday junction).. Endonuclease that resolves Holliday junction intermediates in genetic recombination. Cleaves mobile four-strand junctions by introducing symmetrical nicks in paired strands. Promotes annealing of linear ssDNA with homologous dsDNA. Required for DNA repair, homologous recombination and chromosome segregation. This is Holliday junction resolvase RecU from Streptococcus thermophilus (strain CNRZ 1066).